The following is a 506-amino-acid chain: Ent-kaurenoic acid oxidase (506 aa).

The helical transmembrane segment at 11-31 threads the bilayer; it reads AWAAGDLWVLAAAVVAGVVLV. Residue Cys451 participates in heme binding.

It belongs to the cytochrome P450 family. Heme is required as a cofactor. Expressed in roots and panicles. Expressed at low levels in vegetative shoot apices, leaf sheaths, leaf blades and stems.

The protein resides in the endoplasmic reticulum membrane. It carries out the reaction ent-kaur-16-en-19-oate + 3 reduced [NADPH--hemoprotein reductase] + 3 O2 = gibberellin A12 + 3 oxidized [NADPH--hemoprotein reductase] + 4 H2O + 4 H(+). It catalyses the reaction ent-kaur-16-en-19-oate + reduced [NADPH--hemoprotein reductase] + O2 = ent-7alpha-hydroxykaur-16-en-19-oate + oxidized [NADPH--hemoprotein reductase] + H2O + H(+). The enzyme catalyses ent-7alpha-hydroxykaur-16-en-19-oate + reduced [NADPH--hemoprotein reductase] + O2 = gibberellin A12 aldehyde + oxidized [NADPH--hemoprotein reductase] + 2 H2O + H(+). The catalysed reaction is gibberellin A12 aldehyde + reduced [NADPH--hemoprotein reductase] + O2 = gibberellin A12 + oxidized [NADPH--hemoprotein reductase] + H2O + 2 H(+). The protein operates within plant hormone biosynthesis; gibberellin biosynthesis. Its function is as follows. Involved in gibberellin (GA) biosynthesis. Catalyzes three successive oxidations of ent-kaurenoic acid giving gibberellin 12 (GA12), a key step in GAs biosynthesis. GAs, which are involved many processes, including stem elongation, play a central role in plant development. Required for pollen germination and elongation. The polypeptide is Ent-kaurenoic acid oxidase (Oryza sativa subsp. japonica (Rice)).